We begin with the raw amino-acid sequence, 260 residues long: Membrane protein insertase YidC 1 (260 aa).

The first 22 residues, 1-22 (MLKSYRAVLVSLSLLFVFVLSG), serve as a signal peptide directing secretion. The N-palmitoyl cysteine moiety is linked to residue C23. C23 carries S-diacylglycerol cysteine lipidation. Transmembrane regions (helical) follow at residues 29–49 (IDAHSTGIWDHYFVYPISFMI), 52–72 (VAHHIPGASFGIAIIIMTLVI), 133–153 (LAGCWPLLIQMPIFSALYYAI), 164–184 (FLWVNLGHADPYHILPIIAAL), and 213–233 (MPAMILFMGFAAPSGLVLYWI).

It belongs to the OXA1/ALB3/YidC family. Type 2 subfamily.

It localises to the cell membrane. Required for the insertion and/or proper folding and/or complex formation of integral membrane proteins into the membrane. Involved in integration of membrane proteins that insert both dependently and independently of the Sec translocase complex, as well as at least some lipoproteins. The protein is Membrane protein insertase YidC 1 of Bacillus cereus (strain ATCC 14579 / DSM 31 / CCUG 7414 / JCM 2152 / NBRC 15305 / NCIMB 9373 / NCTC 2599 / NRRL B-3711).